Consider the following 184-residue polypeptide: NADH-quinone oxidoreductase subunit B (184 aa).

[4Fe-4S] cluster-binding residues include cysteine 37, cysteine 38, cysteine 103, and cysteine 132.

It belongs to the complex I 20 kDa subunit family. NDH-1 is composed of 14 different subunits. Subunits NuoB, C, D, E, F, and G constitute the peripheral sector of the complex. It depends on [4Fe-4S] cluster as a cofactor.

It is found in the cell membrane. The enzyme catalyses a quinone + NADH + 5 H(+)(in) = a quinol + NAD(+) + 4 H(+)(out). In terms of biological role, NDH-1 shuttles electrons from NADH, via FMN and iron-sulfur (Fe-S) centers, to quinones in the respiratory chain. The immediate electron acceptor for the enzyme in this species is believed to be a menaquinone. Couples the redox reaction to proton translocation (for every two electrons transferred, four hydrogen ions are translocated across the cytoplasmic membrane), and thus conserves the redox energy in a proton gradient. The protein is NADH-quinone oxidoreductase subunit B of Mycolicibacterium paratuberculosis (strain ATCC BAA-968 / K-10) (Mycobacterium paratuberculosis).